Reading from the N-terminus, the 119-residue chain is Large ribosomal subunit protein bL20 (119 aa).

This sequence belongs to the bacterial ribosomal protein bL20 family.

Its function is as follows. Binds directly to 23S ribosomal RNA and is necessary for the in vitro assembly process of the 50S ribosomal subunit. It is not involved in the protein synthesizing functions of that subunit. The polypeptide is Large ribosomal subunit protein bL20 (Shewanella frigidimarina (strain NCIMB 400)).